We begin with the raw amino-acid sequence, 244 residues long: Probable 2-phosphosulfolactate phosphatase (244 aa).

It belongs to the ComB family. Mg(2+) serves as cofactor.

It catalyses the reaction (2R)-O-phospho-3-sulfolactate + H2O = (2R)-3-sulfolactate + phosphate. The sequence is that of Probable 2-phosphosulfolactate phosphatase from Cyanothece sp. (strain PCC 7425 / ATCC 29141).